The primary structure comprises 199 residues: Recombination protein RecR (199 aa).

Residues 56-71 (CAICGNVAEHEQCRIC) form a C4-type zinc finger. Positions 79-174 (TVLCVVEEPK…RVTRLASGLP (96 aa)) constitute a Toprim domain.

Belongs to the RecR family.

Its function is as follows. May play a role in DNA repair. It seems to be involved in an RecBC-independent recombinational process of DNA repair. It may act with RecF and RecO. This Acidothermus cellulolyticus (strain ATCC 43068 / DSM 8971 / 11B) protein is Recombination protein RecR.